Consider the following 891-residue polypeptide: MKVGQDSLSTKSQLTVDGKTYNYYSLKEAENKHFKGINRLPYSLKVLLENLLRFEDGNTVTTKDIKAIADWLHNKTSQHEIAFRPTRVLMQDFTGVPAVVDLAAMRTAIVKMGGNADKISPLSPVDLVIDHSVMVDKFASADALEVNTKIEIERNKERYEFLRWGQKAFSNFQVVPPGTGICHQVNLEYLGKTVWNSENDGQLYAYPDTLVGTDSHTTMINGLGVLGWGVGGIEAEAAMLGQPVSMLIPEVIGFKLSGKLKEGITATDLVLTVTQMLRKKGVVGKFVEFYGPGLNDLPLADRATISNMAPEYGATCGFFPVDKETIKYLELTGRDKHTIALVEAYAKAQGMWYDKDNEEPVFTDSLHLDLGSVEPSLAGPKRPQDKVNLSSLPVEFNNFLIEVGKEKEKEKTFAVKNKDFQMKHGHVVIAAITSCTNTSNPSVLMAAGLVAKKAIEKGLQRKPWVKSSLAPGSKVVTDYLRHAGLQTYLDQLGFNLVGYGCTTCIGNSGPLPDDISHCVAEHDLVVSSVLSGNRNFEGRVHPQVRANWLASPPLVVAYALCGTTCSDLSREPIGQDKEGNDVYLKDIWPSNEEIAAEVAKVSGTMFRKEYAEVFKGDAHWQAIQTSSGQTYEWNPDSTYIQHPPFFENLSLKPEPLKPIKQAYVLALFGDSITTDHISPAGSIKASSPAGLYLKSKGVDEKDFNSYGSRRGNHEVMMRGTFANIRIRNEMTPGQEGGVTRYVPTGETMSIYDAAMRYQENQQDLVIIAGKEYGTGSSRDWAAKGTNLLGVKAVITESFERIHRSNLIGMGILPLQFKEGTTRKTLKLDGSERISIEISDKLTPGAMVPVTIERQDGDIEKIETLCRIDTADELEYYKNGGILQYVLRKISS.

Residues Cys435, Cys501, and Cys504 each coordinate [4Fe-4S] cluster.

This sequence belongs to the aconitase/IPM isomerase family. As to quaternary structure, monomer. The cofactor is [4Fe-4S] cluster.

The catalysed reaction is citrate = D-threo-isocitrate. The enzyme catalyses (2S,3R)-3-hydroxybutane-1,2,3-tricarboxylate = 2-methyl-cis-aconitate + H2O. The protein operates within carbohydrate metabolism; tricarboxylic acid cycle; isocitrate from oxaloacetate: step 2/2. Its pathway is organic acid metabolism; propanoate degradation. Functionally, involved in the catabolism of short chain fatty acids (SCFA) via the tricarboxylic acid (TCA)(acetyl degradation route) and probably the 2-methylcitrate cycle I (propionate degradation route). Catalyzes the reversible isomerization of citrate to isocitrate via cis-aconitate. The apo form of AcnA functions as a RNA-binding regulatory protein. Could catalyze the hydration of 2-methyl-cis-aconitate to yield (2R,3S)-2-methylisocitrate. The polypeptide is Aconitate hydratase A (acn) (Legionella pneumophila subsp. pneumophila (strain Philadelphia 1 / ATCC 33152 / DSM 7513)).